The sequence spans 435 residues: Adenylosuccinate synthetase (435 aa).

Residues 11-17 (GDEGKGK) and 39-41 (GHT) contribute to the GTP site. D12 acts as the Proton acceptor in catalysis. Residues D12 and G39 each contribute to the Mg(2+) site. IMP-binding positions include 12-15 (DEGK), 37-40 (NAGH), T128, R142, Q223, T238, and R302. Catalysis depends on H40, which acts as the Proton donor. 298-304 (SVTGRPR) contributes to the substrate binding site. Residues R304, 330-332 (KLD), and 412-414 (STG) contribute to the GTP site.

Belongs to the adenylosuccinate synthetase family. As to quaternary structure, homodimer. Mg(2+) serves as cofactor.

It is found in the cytoplasm. The catalysed reaction is IMP + L-aspartate + GTP = N(6)-(1,2-dicarboxyethyl)-AMP + GDP + phosphate + 2 H(+). It participates in purine metabolism; AMP biosynthesis via de novo pathway; AMP from IMP: step 1/2. Plays an important role in the de novo pathway of purine nucleotide biosynthesis. Catalyzes the first committed step in the biosynthesis of AMP from IMP. In Coxiella burnetii (strain CbuK_Q154) (Coxiella burnetii (strain Q154)), this protein is Adenylosuccinate synthetase.